A 75-amino-acid chain; its full sequence is UPF0181 protein ETA_15280 (75 aa).

It belongs to the UPF0181 family.

In Erwinia tasmaniensis (strain DSM 17950 / CFBP 7177 / CIP 109463 / NCPPB 4357 / Et1/99), this protein is UPF0181 protein ETA_15280.